The primary structure comprises 264 residues: Probable glycerophosphodiester phosphodiesterase 2 (264 aa).

One can recognise a GP-PDE domain in the interval R17–L255. Catalysis depends on H22, which acts as the Proton acceptor. The a divalent metal cation site is built by E50, D52, and H65. Catalysis depends on H65, which acts as the Proton donor.

Belongs to the glycerophosphoryl diester phosphodiesterase family. A divalent metal cation is required as a cofactor.

The catalysed reaction is a sn-glycero-3-phosphodiester + H2O = an alcohol + sn-glycerol 3-phosphate + H(+). Its function is as follows. Glycerophosphodiester phosphodiesterase hydrolyzes glycerophosphodiesters into glycerol-3-phosphate (G3P) and the corresponding alcohol. The sequence is that of Probable glycerophosphodiester phosphodiesterase 2 from Mycobacterium tuberculosis (strain ATCC 25618 / H37Rv).